Here is a 520-residue protein sequence, read N- to C-terminus: Ribonuclease Y (520 aa).

Residues 3 to 23 traverse the membrane as a helical segment; that stretch reads IELAIIFIVLAAGAGFLIGNL. The KH domain maps to 210–273; sequence TVSVVALPSD…EVAKIALEKL (64 aa). Positions 336–429 constitute an HD domain; that stretch reads VYQHSLEVAF…VQAADALSGA (94 aa).

The protein belongs to the RNase Y family.

The protein resides in the cell membrane. In terms of biological role, endoribonuclease that initiates mRNA decay. This is Ribonuclease Y from Geobacter sulfurreducens (strain ATCC 51573 / DSM 12127 / PCA).